The primary structure comprises 414 residues: Phosphoglycerate kinase (414 aa).

Residues 19–21, Arg-34, 57–60, Arg-114, and Arg-154 contribute to the substrate site; these read DLN and HQSK. Residues Glu-332 and 358–361 each bind ATP; that span reads GGHS.

The protein belongs to the phosphoglycerate kinase family. In terms of assembly, monomer.

The protein resides in the cytoplasm. It catalyses the reaction (2R)-3-phosphoglycerate + ATP = (2R)-3-phospho-glyceroyl phosphate + ADP. The protein operates within carbohydrate degradation; glycolysis; pyruvate from D-glyceraldehyde 3-phosphate: step 2/5. The polypeptide is Phosphoglycerate kinase (Thermococcus onnurineus (strain NA1)).